Here is a 72-residue protein sequence, read N- to C-terminus: BBSome-interacting protein 1 (72 aa).

It belongs to the BBIP10 family.

Its subcellular location is the cell projection. It is found in the cilium. The protein resides in the cytoplasm. Its function is as follows. Required for primary cilia assembly. The polypeptide is BBSome-interacting protein 1 (bbip1) (Danio rerio (Zebrafish)).